Consider the following 171-residue polypeptide: Homeobox protein engrailed-1-B (171 aa).

2 disordered regions span residues 1–41 (EDPG…NAAP) and 60–86 (YSDRPSSGPRTRKLKKKKSEKEDKRPR). Residues 15–29 (PDSDTPSDSSKGSDS) are compositionally biased toward low complexity. Positions 82–141 (DKRPRTAFTAEQLQRLKAEFQANRYITEQRRQTLAQELSLNESQIKIWFQNKRAKIKKAS) form a DNA-binding region, homeobox.

The protein belongs to the engrailed homeobox family.

The protein localises to the nucleus. In terms of biological role, required for proper formation of the apical ectodermal ridge and correct dorsal-ventral patterning in the limb. This chain is Homeobox protein engrailed-1-B (en1-b), found in Xenopus laevis (African clawed frog).